The chain runs to 487 residues: Protein nucleotidyltransferase YdiU (487 aa).

8 residues coordinate ATP: glycine 90, glycine 92, arginine 93, lysine 113, aspartate 125, glycine 126, arginine 176, and arginine 183. Catalysis depends on aspartate 252, which acts as the Proton acceptor. Asparagine 253 and aspartate 262 together coordinate Mg(2+). Aspartate 262 contacts ATP.

It belongs to the SELO family. Mg(2+) is required as a cofactor. Mn(2+) serves as cofactor.

It carries out the reaction L-seryl-[protein] + ATP = 3-O-(5'-adenylyl)-L-seryl-[protein] + diphosphate. The enzyme catalyses L-threonyl-[protein] + ATP = 3-O-(5'-adenylyl)-L-threonyl-[protein] + diphosphate. The catalysed reaction is L-tyrosyl-[protein] + ATP = O-(5'-adenylyl)-L-tyrosyl-[protein] + diphosphate. It catalyses the reaction L-histidyl-[protein] + UTP = N(tele)-(5'-uridylyl)-L-histidyl-[protein] + diphosphate. It carries out the reaction L-seryl-[protein] + UTP = O-(5'-uridylyl)-L-seryl-[protein] + diphosphate. The enzyme catalyses L-tyrosyl-[protein] + UTP = O-(5'-uridylyl)-L-tyrosyl-[protein] + diphosphate. In terms of biological role, nucleotidyltransferase involved in the post-translational modification of proteins. It can catalyze the addition of adenosine monophosphate (AMP) or uridine monophosphate (UMP) to a protein, resulting in modifications known as AMPylation and UMPylation. This Azotobacter vinelandii (strain DJ / ATCC BAA-1303) protein is Protein nucleotidyltransferase YdiU.